We begin with the raw amino-acid sequence, 3535 residues long: MAGMEVKEKEEQLLLDTLIGLWSQYLQASELEDASVKDHWLWLLLYNLQFLDDKNLQDAWLNSHFNLMPEELCSYLLEQVYQIISEAKRSQESSPTHEPEQQDKCIKQLRKQHNLAQLILSTPSDCNKILALRTFLTDKLGHHLLTFLLRVDIKLIASQKSLCHLCINLFPNCKWSASNEQLIPMTSIAQFIGSFYLNSQSKKLRRQQQPKSQLPNHISNPIKSSFEDFRGTTRSSDELALLLIQLLTRCVDAEQESQLSVTVHNFALGHLCSSSEQDASGNNDELIKFELLQLIAHCVNNFYVLEQQQPNVHDFNSNFGQLLYALTANRRSPLLAHGVLYIMFGTLHNLVDNGVRELNQIDVRNFDACFEVLQEAAKSTNFSTAIFLHIYKMLLRLTDNLSSQEQHLQSLMESSASTAMPKQQQHPRHKRQRSSQLHCLGATSLSCYFQGKLYHLLPSLEAELQEHSVRSLLRTGSCCCHYNVRNYATCLQLATQLSSSYQKCAYKFLHYNVLHTIFVKRNPQGCPGCEDKLKSPVFHMDLLNIYKDNYKALLNTPAMLLFLKHLKHIAYLLPYDLASGILAEVALPIFRRYKELIESGESKRKISKVTPLQLPSKLENYRALHECLSIFVMYLSDIRLVKAFYNEENIRYMQDLLIIPELQRGVCDLIKVGIDNIAFLGENSQEQITLSRRLIQLQLNSSDRASQLFQALLYKCSKHSRAKFWLDESSTPAKLEGHKPADILYITALQWTLNFELLKTSQLFYNEFAKIYSIPVEMLDDEDEDEVETPTSELLPGEKKLRHGDKNIFDILKLNYNALGCFLMLPKATMGPTTSSTATTPTAGICGSSSLETLVSQLPLAGSTSVSVTTAASSDYADSTLDYASVIGNYDSYSRDMATPSFLQQLLACEPDESTVLFDIRGSQSSKDNPSNSLILPSEEEGATADGIINKLFSIVGSLFGGSPGSGGSANSPTRANIDADFFCLYEPNGECKKLLLKLFEATMAICIKGFQNEEVEKMQKHLRKLRAIILSHATDNWSEHGEQHARDNAVIQTLQTLLKIAELSSTHQEPTGVVNSPSGDSQQPRPRARSFNSGSVELPRLQTVKLPAKNSLATPPTPRRRPNSSEANAGVDADYFSTRASLSCAADSELELSENEHEFYLTADEGYEADGEIADLSESECELNGGVLAANESTWTPFQPSSRYRSHIMHQGLSQLVVQMLAELSLLCIKQPNGWTESLTQLANRLFVIRDYLGGPLCLLKGFAPILSCSDPRLRELQQSILELVTHLNTPEVLQCYYSILASKQPPVDLLMRHMHHISSGSLRKAQPCMELDFPIITDGKIVVTSEPLVSEQIERVRLHHQQCQTNTLFTRAACIFPVTQTRLWQPDGLTLSLWLELRGQQMHRSSMQFNDDETRYSGEDLTKLHLLSLGTNQAMVSIYISNNMQLIFELVKPNEQLAPVRVEEQIEANADTASVISANTQAANGGTIRQALKQTKLALLNSFGQMHLLNGHQASADSTGGYFESSAVQLQHLRLPRHKWMHLVFGLQQQADSVEISIFLDGLEQHTMRLPFRNLRQLTRVHSFQLLALGEGQPTGRSPGSSSSSRSTLDGSTPRYALSNVILFKRRLVDPLLMMNLTAMGPDFTEFTQCQVANWKPNYGFVSLGKLSSSNFGNHLDCMRQLRQARVLVYTAQQPDLVMSYDASQELDMACYGQPHGHMLYGELQQHQAQTLQAATSLSGGLSTLLYLFARIVELTGNASTQALALDLLLQVAHSDAQLYTEFQRQDYLSLIGYVIKSEKCSKDVQLLRSIVNNACSQVLITRKGDSINVNDNTMATLVYPRLMLTVLQRYSDWHRSGATHSDVLDMLFRCILALTRDKHPQRDFNMEQLQKCGLLGALLNLCKVYVIESPSPVQISPYAAECFVQILAVFSGSPPDSSMLDEIMKLLLLLHKPSDCYVTHDRTHFYFLLTAQQPTKERSLVAANLSRVTTSLRRQLHPQPQELDPERAERIKKLRRLHASTSGYRKAVNEFEEHLDQMADCSNLNKSALRLLSPVEATRWRLKFKRRHPTSANSPKRSPLKIARRRIHPHLHLGKIWQPSGHSTPSSGQSSLPNRKTDFYDQLGIIRLQQRLLILLKDFLCLLPDSSVDVVTRHYVKLELLLVLANQRSCAVRQAIIQLVDVLTKRLPSGELNAATKLMHPLHLANQLTIHGCDVGMFEACLAWINGMHCSLTDIQSCDAPVRIRQRFGLPSLLAIAEGTEPQWVFKALLRLYLQNPDDQTCLIEAGLLQCSVKALYKIYSLRVGQSNADESVVELLATIGERAMRSVGQINLVWDILNLLSFYQDKQPQLIMRSFRTAQAQLQLEWLTKFFEPNSFRVAVTNDSSLSHSELRTRVELLIDRCTQFFTVGVGQTTGPNYVASSQELALFQLLVSYGISSNQRCNNFIAWGLQPSRPRDLRSYIVDALWRSQQDEFQRAIICDAKMIKALLWLSLLEDMPEPIENLKPLCDALGIKENDSSWNLVHELDRLDQNRNNMAAKQKTLLEKTVYRFEPLVQQCVESSMVTTRKVAELQNAERKALMCHMKVYDDTYTYTKWLEIIRRMTHEGAPWHSAERAECSWELDDTEGPSRVHTRLRRCHLDIDRRFFMNEYRPGQGHREDLEPYVRPLDYLIASYDQQLNISLNSQILYNFAAKFLPVDGEIEGEIIITDLKLYFLATYRCRYFNVNCDIANITEIWLKRYQHQETAFEILLDTNKSLFFSLQNADDWKIMREVFCDKIVATPDQSKVIAITQQWREGLLTNWEYLMTLNQISGRTYNDLMQYPVFPWVLANYNSEVLDLREGHNFRRLGRPIAVQVEENEKHYISNYTYIDSTNTTMGSLILKPYHYSSHYSNSGTVLHFLVRVPPFTSYFLRYQDNDFDLPDRTFHALNTTWLLASRDSPTDVKELIPEFFCLPEMFENFERFKFGCRQNGERVEDVSLPPWSQRDSRLFVLIHRQALESELVRNQIHNWIDLIFGYKQSGESAVEAINVFHPATYAVFLDSEISDPIEREAVKTMVKTYGQMPRQLFKSPHPASKPLDYSLVGKPIVSTVRGLRWGVYVGSPQLKAPSWANIHKIPGTEHLVSFCNTNVVYALPGRASVMQGAEPDTYNVISWGYDDRIVRIQPLNKPQAKPKNLLHNGTFDDITACGCDVNSNQLWFGHKSGRISVYKCTGGLDSQQRASAKSRQSYARGFSLSYNSAFRKMTNKGIGGGGSERVDEAGNLHPTSSASSVNSSSISSGGDAFQRDGADLNWLGPTLLVRHTDEITCITLSVEFKIAVTAGRDGIAVIWDLNDWSYVRTIARPAEIHQSPITHVAISPTLGDIVTVHTLPQSCNTSTDPKPTAVATRPNSLNVADECFEVTEENLDDFVNVNVNPNGKSILRLHSVNARYVQHLVHEDRILAVCYSYIKEGVGVNVIATAVEGGFVRFWSSWNLSFVSELTTGTSPIRSICYSTHQHLVVLTRESHIQVWESEGLYGNAPKFPQIVYK.

The interval 412–436 is disordered; it reads MESSASTAMPKQQQHPRHKRQRSSQ. Residues 689 to 736 form a WD 1 repeat; that stretch reads TLSRRLIQLQLNSSDRASQLFQALLYKCSKHSRAKFWLDESSTPAKLE. Residues 1066 to 1096 are compositionally biased toward polar residues; the sequence is STHQEPTGVVNSPSGDSQQPRPRARSFNSGS. 2 disordered regions span residues 1066 to 1132 and 1592 to 1613; these read STHQ…NAGV and GEGQ…TLDG. Residues 1596–1610 are compositionally biased toward low complexity; that stretch reads PTGRSPGSSSSSRST. Residues 2686–2784 form the BEACH-type PH domain; sequence SLNSQILYNF…MREVFCDKIV (99 aa). One can recognise a BEACH domain in the interval 2784–3081; it reads VATPDQSKVI…QLFKSPHPAS (298 aa). Residues 3254–3287 are disordered; it reads GIGGGGSERVDEAGNLHPTSSASSVNSSSISSGG. Residues 3273 to 3285 are compositionally biased toward low complexity; that stretch reads SSASSVNSSSISS. WD repeat units follow at residues 3307–3346, 3442–3486, and 3489–3527; these read RHTD…YVRT, VHED…FVSE, and TGTS…GNAP.

Interacts with Rab5; the interaction is independent of GDP or GTP. Interacts with msps.

It is found in the vesicle. The protein localises to the cytoplasm. Its subcellular location is the cytoskeleton. The protein resides in the spindle. It localises to the spindle pole. Functionally, adapter protein that regulates intracellular membrane fusion reactions. Regulates the fusion of lysosome-related organelles. Promotes microtubules nucleation and centrosomal recruitment of microtubule nucleating proteins such as msps. In syncytial embryos, during the formation of yolk granules, suppresses vesicle fusion events with lipid droplets, possibly via interaction with Rab5. In the eye, regulates pigment granules size. In hemocytes, required for the late steps of bacteria phagocytosis. In fat body, required for autophagosome maturation. The sequence is that of Lysosomal-trafficking regulator from Drosophila melanogaster (Fruit fly).